A 514-amino-acid chain; its full sequence is Cobyric acid synthase (514 aa).

The 195-residue stretch at 263-457 (ALDVAVIRLP…LHGIFDNDPL (195 aa)) folds into the GATase cobBQ-type domain. Cysteine 344 acts as the Nucleophile in catalysis. Histidine 449 is an active-site residue.

This sequence belongs to the CobB/CobQ family. CobQ subfamily.

The protein operates within cofactor biosynthesis; adenosylcobalamin biosynthesis. Its function is as follows. Catalyzes amidations at positions B, D, E, and G on adenosylcobyrinic A,C-diamide. NH(2) groups are provided by glutamine, and one molecule of ATP is hydrogenolyzed for each amidation. This is Cobyric acid synthase from Desulfitobacterium hafniense (strain DSM 10664 / DCB-2).